Reading from the N-terminus, the 239-residue chain is Ankyrin repeat domain-containing protein 49 (239 aa).

S49 is subject to Phosphoserine. ANK repeat units follow at residues 73–103, 107–136, 140–169, and 173–206; these read DPSRLLLWAAEKNRLTTVRRLLSEKATHVNT, DEYTPLHRAAYSGHLDIVQELIAQGADVHA, DGWTPLHSACKWNNTRVASFLLQHDADINA, and GLLTPLHLAAGNRDSKDTLELLLMNRYVKPGLKN.

As to expression, widely expressed in fetus, at a high level in fetal liver, brain and lung.

Its subcellular location is the nucleus. Its function is as follows. Induces HBG1 expression. May have a role in spermatogenesis where it promotes autophagy in response to serum starvation, via the NF-kappaB pathway. This Homo sapiens (Human) protein is Ankyrin repeat domain-containing protein 49 (ANKRD49).